A 281-amino-acid chain; its full sequence is Transformer-2 protein homolog alpha (281 aa).

The tract at residues 1–116 is disordered; sequence MSDVEENNFE…TGSRANPDPN (116 aa). An N-acetylserine modification is found at Ser-2. A phosphoserine mark is found at Ser-2 and Ser-14. At Thr-24 the chain carries Phosphothreonine. Residues 51–82 are compositionally biased toward basic residues; the sequence is RSRSKSRSRSRRHSHRRYTRSRSHSHRRRSRS. Phosphoserine is present on residues Ser-80, Ser-82, and Ser-84. Position 86 is a phosphothreonine (Thr-86). Positions 90 to 108 are enriched in basic residues; that stretch reads RRRRSRSHSPMSNRRRHTG. Phosphoserine occurs at positions 94 and 96. The RRM domain occupies 117–195; that stretch reads TCLGVFGLSL…RRIRVDYSIT (79 aa). A Glycyl lysine isopeptide (Lys-Gly) (interchain with G-Cter in SUMO2) cross-link involves residue Lys-196. Residues 196–223 are linker; that stretch reads KRAHTPTPGIYMGRPTHSGGGGGGGGGG. Residues 199–281 form a disordered region; the sequence is HTPTPGIYMG…RSRSYSPRRY (83 aa). Phosphothreonine occurs at positions 200 and 202. The span at 213–231 shows a compositional bias: gly residues; sequence SGGGGGGGGGGGGGGGGGG. Arg-233 carries the omega-N-methylarginine modification. A compositionally biased stretch (basic and acidic residues) spans 233–257; the sequence is RRRDSYYDRGYDRGYDRYEDYDYRR. Ser-237 is modified (phosphoserine). A compositionally biased stretch (basic residues) spans 267-281; sequence YRSRSRSRSYSPRRY.

Belongs to the splicing factor SR family. Binds to A3 enhancer proteins SRp75, SRp55, SRp40 and SRp30. Interacts with ILDR1 (via C-terminus) and ILDR2. Post-translationally, phosphorylated in the RS domains. In terms of tissue distribution, expressed in inner ear.

The protein localises to the nucleus. In terms of biological role, sequence-specific RNA-binding protein which participates in the control of pre-mRNA splicing. This is Transformer-2 protein homolog alpha from Mus musculus (Mouse).